The primary structure comprises 248 residues: NH(3)-dependent NAD(+) synthetase (248 aa).

31 to 38 serves as a coordination point for ATP; that stretch reads GLSGGVDS. Aspartate 37 is a binding site for Mg(2+). Deamido-NAD(+) is bound at residue arginine 114. Threonine 134 provides a ligand contact to ATP. Glutamate 139 lines the Mg(2+) pocket. 2 residues coordinate deamido-NAD(+): lysine 147 and aspartate 154. ATP-binding residues include lysine 163 and threonine 185. A deamido-NAD(+)-binding site is contributed by 232–233; it reads HK.

The protein belongs to the NAD synthetase family. Homodimer.

It carries out the reaction deamido-NAD(+) + NH4(+) + ATP = AMP + diphosphate + NAD(+) + H(+). It participates in cofactor biosynthesis; NAD(+) biosynthesis; NAD(+) from deamido-NAD(+) (ammonia route): step 1/1. In terms of biological role, catalyzes the ATP-dependent amidation of deamido-NAD to form NAD. Uses ammonia as a nitrogen source. In Mycoplasma pneumoniae (strain ATCC 29342 / M129 / Subtype 1) (Mycoplasmoides pneumoniae), this protein is NH(3)-dependent NAD(+) synthetase.